A 132-amino-acid chain; its full sequence is Small ribosomal subunit protein uS8 (132 aa).

This sequence belongs to the universal ribosomal protein uS8 family. Part of the 30S ribosomal subunit. Contacts proteins S5 and S12.

In terms of biological role, one of the primary rRNA binding proteins, it binds directly to 16S rRNA central domain where it helps coordinate assembly of the platform of the 30S subunit. The chain is Small ribosomal subunit protein uS8 from Rickettsia typhi (strain ATCC VR-144 / Wilmington).